A 339-amino-acid polypeptide reads, in one-letter code: Retinol dehydrogenase 10-A (339 aa).

A helical; Signal-anchor transmembrane segment spans residues 3–23; it reads IFVEFFLVMLKVCWAIVMAGF. 40–64 is an NADP(+) binding site; sequence VITGAGGGLGRLFAKEFARRRATLV. Position 195 (Ser195) interacts with substrate. Tyr208 acts as the Proton acceptor in catalysis.

Belongs to the short-chain dehydrogenases/reductases (SDR) family.

It localises to the microsome membrane. The protein localises to the endoplasmic reticulum membrane. The catalysed reaction is all-trans-retinol + NADP(+) = all-trans-retinal + NADPH + H(+). It participates in cofactor metabolism; retinol metabolism. In terms of biological role, retinol dehydrogenase with a clear preference for NADP. Converts all-trans-retinol to all-trans-retinal. Has no detectable activity towards 11-cis-retinol, 9-cis-retinol and 13-cis-retinol. The sequence is that of Retinol dehydrogenase 10-A (rdh10a) from Danio rerio (Zebrafish).